We begin with the raw amino-acid sequence, 331 residues long: Biotin synthase (331 aa).

One can recognise a Radical SAM core domain in the interval 53–272; the sequence is NHVETASLLS…LATARVMMPR (220 aa). Residues cysteine 68, cysteine 72, and cysteine 75 each contribute to the [4Fe-4S] cluster site. 4 residues coordinate [2Fe-2S] cluster: cysteine 112, cysteine 143, cysteine 203, and arginine 276.

This sequence belongs to the radical SAM superfamily. Biotin synthase family. As to quaternary structure, homodimer. It depends on [4Fe-4S] cluster as a cofactor. Requires [2Fe-2S] cluster as cofactor.

The enzyme catalyses (4R,5S)-dethiobiotin + (sulfur carrier)-SH + 2 reduced [2Fe-2S]-[ferredoxin] + 2 S-adenosyl-L-methionine = (sulfur carrier)-H + biotin + 2 5'-deoxyadenosine + 2 L-methionine + 2 oxidized [2Fe-2S]-[ferredoxin]. The protein operates within cofactor biosynthesis; biotin biosynthesis; biotin from 7,8-diaminononanoate: step 2/2. Catalyzes the conversion of dethiobiotin (DTB) to biotin by the insertion of a sulfur atom into dethiobiotin via a radical-based mechanism. In Bradyrhizobium diazoefficiens (strain JCM 10833 / BCRC 13528 / IAM 13628 / NBRC 14792 / USDA 110), this protein is Biotin synthase.